The sequence spans 384 residues: 8-amino-7-oxononanoate synthase (384 aa).

R21 contacts substrate. Residue 108-109 coordinates pyridoxal 5'-phosphate; the sequence is GF. H133 contacts substrate. Residues S179, H207, and T233 each coordinate pyridoxal 5'-phosphate. Position 236 is an N6-(pyridoxal phosphate)lysine (K236). Residue T352 participates in substrate binding.

Belongs to the class-II pyridoxal-phosphate-dependent aminotransferase family. BioF subfamily. In terms of assembly, homodimer. Requires pyridoxal 5'-phosphate as cofactor.

It carries out the reaction 6-carboxyhexanoyl-[ACP] + L-alanine + H(+) = (8S)-8-amino-7-oxononanoate + holo-[ACP] + CO2. The protein operates within cofactor biosynthesis; biotin biosynthesis. Its function is as follows. Catalyzes the decarboxylative condensation of pimeloyl-[acyl-carrier protein] and L-alanine to produce 8-amino-7-oxononanoate (AON), [acyl-carrier protein], and carbon dioxide. The sequence is that of 8-amino-7-oxononanoate synthase from Escherichia coli (strain K12 / DH10B).